Reading from the N-terminus, the 132-residue chain is Neurophysin 2 (132 aa).

Disulfide bonds link C10/C54, C13/C27, C21/C44, C28/C34, C61/C73, C67/C85, and C74/C79.

This sequence belongs to the vasopressin/oxytocin family.

Its subcellular location is the secreted. In terms of biological role, neurophysin 2 specifically binds vasopressin. This Struthio camelus (Common ostrich) protein is Neurophysin 2.